A 272-amino-acid polypeptide reads, in one-letter code: Exosome complex component Rrp42 (272 aa).

It belongs to the RNase PH family. Rrp42 subfamily. As to quaternary structure, component of the archaeal exosome complex. Forms a hexameric ring-like arrangement composed of 3 Rrp41-Rrp42 heterodimers. The hexameric ring associates with a trimer of Rrp4 and/or Csl4 subunits.

The protein localises to the cytoplasm. Non-catalytic component of the exosome, which is a complex involved in RNA degradation. Contributes to the structuring of the Rrp41 active site. The polypeptide is Exosome complex component Rrp42 (Thermococcus kodakarensis (strain ATCC BAA-918 / JCM 12380 / KOD1) (Pyrococcus kodakaraensis (strain KOD1))).